Here is a 469-residue protein sequence, read N- to C-terminus: Asparagine--tRNA ligase (469 aa).

The protein belongs to the class-II aminoacyl-tRNA synthetase family. As to quaternary structure, homodimer.

Its subcellular location is the cytoplasm. It carries out the reaction tRNA(Asn) + L-asparagine + ATP = L-asparaginyl-tRNA(Asn) + AMP + diphosphate + H(+). This Porphyromonas gingivalis (strain ATCC BAA-308 / W83) protein is Asparagine--tRNA ligase.